The primary structure comprises 905 residues: FIGNL1-interacting regulator of recombination and mitosis (905 aa).

Phosphoserine is present on residues S101 and S796. Residue K845 is modified to N6-acetyllysine.

In terms of assembly, interacts (via its N-terminal region) with PLK1; controls PLK1 kinase activity. Interacts (via the KVVXF motif) with PPP1CC; controls PLK1 kinase activity. Interacts with FIGNL1; may regulate homologous recombination. In terms of processing, phosphorylation at Ser-101 by PLK1 strengthens FIRRM-PLK1 interaction. Phosphorylation at Ser-796 by PLK1 negatively regulates its interaction with PPP1CC.

Its subcellular location is the chromosome. It is found in the centromere. The protein localises to the kinetochore. The protein resides in the nucleus. It localises to the midbody. Its subcellular location is the cytoplasm. It is found in the cytoskeleton. The protein localises to the spindle. Functionally, regulates PLK1 kinase activity at kinetochores and promotes faithful chromosome segregation in prometaphase by bridging kinase and phosphatase activities. Phosphorylation of FIRRM by PLK1 negatively regulates its interaction with the phosphatase, PPP1CC, thus creating a negative feedback loop for maintaining proper PLK1 kinase activity during mitosis. In complex with FIGL1 may regulate homologous recombination. The polypeptide is FIGNL1-interacting regulator of recombination and mitosis (Rattus norvegicus (Rat)).